Consider the following 1171-residue polypeptide: APC-related protein 1 (1171 aa).

Residues 1–54 (MSSSSSDENETTIHSSSNPGSSGIYSQLKAGSSKRPSVRHDVSDAEDDEEPYEG) are disordered. A required for interaction with bar-1 and hmp-2 region spans residues 1-481 (MSSSSSDENE…LSLRATRASP (481 aa)). A compositionally biased stretch (low complexity) spans 15-26 (SSSNPGSSGIYS). The stretch at 312 to 356 (NCLKVLANILSPDARFTTLVDSASGILKYVSQYLATNSSHLELRS) is one ARM repeat. 6 disordered regions span residues 587–617 (PVDD…NPGS), 662–699 (HPED…GTTV), 720–741 (RKTS…LEVE), 767–822 (EEMP…EMTT), 837–936 (PRSR…TMRI), and 995–1030 (SSGS…SSLP). The required for interaction with pry-1 stretch occupies residues 591–1171 (DLDIPTSTVM…NPKQMLVTIV (581 aa)). Composition is skewed to polar residues over residues 595 to 617 (PTST…NPGS) and 666 to 697 (NQMT…SDGT). Residues 788–799 (FSPSQKTTSSPA) show a composition bias toward polar residues. Residues 857–874 (EPDRSSHSKNEEADRRDA) show a composition bias toward basic and acidic residues. 2 stretches are compositionally biased toward polar residues: residues 890-913 (RGSS…SSED) and 1002-1028 (LQKA…SVSS).

This sequence belongs to the adenomatous polyposis coli (APC) family. As to quaternary structure, interacts (via N-terminus) with bar-1 and hmp-2; the interaction with hmp-2 is relatively weak. Interacts (via C-terminus) with pry-1 (via N-terminus). Probably associates with bar-1, gsk-3, pry-1 in a complex.

It localises to the cell junction. It is found in the adherens junction. Its subcellular location is the cytoplasm. The protein localises to the nucleus. In terms of biological role, has a role in endoderm cell specification and pharyngeal development. Required for the migration of epithelial cells, organization of the anterior seam cells and ceh-13 expression during embryo morphogenesis. Prevents hyperactivation of the Wnt signaling pathway during endoderm development, probably by preventing hmp-2 nuclear translocation. During larval development, apr-1 is required for expression of lin-39 in P3-8.p. Shown to negatively regulate Wnt signaling in vulval precursor cells. Has a role in cell division by establishing the polarity of the mother cell which forms the asymmetries of the daughter nuclei. Thought to regulate export of wrm-1 from the nucleus possibly as part of a complex involving pry-1. The chain is APC-related protein 1 from Caenorhabditis briggsae.